A 599-amino-acid chain; its full sequence is Cytosolic Fe-S cluster assembly factor nar1 (599 aa).

Residues C20, C62, C65, C68, C210, C265, C468, and C472 each contribute to the [4Fe-4S] cluster site.

Belongs to the NARF family.

Component of the cytosolic Fe/S protein assembly machinery. Required for maturation of extramitochondrial Fe/S proteins. May play a role in the transfer of pre-assembled Fe/S clusters to target apoproteins. The protein is Cytosolic Fe-S cluster assembly factor nar1 (nar1) of Aspergillus terreus (strain NIH 2624 / FGSC A1156).